Consider the following 122-residue polypeptide: Small ribosomal subunit protein uS13 (122 aa).

The interval 92 to 122 is disordered; it reads HRKQLPVRGQRTHTNARTRKGKAKPIAGKKK.

This sequence belongs to the universal ribosomal protein uS13 family. As to quaternary structure, part of the 30S ribosomal subunit. Forms a loose heterodimer with protein S19. Forms two bridges to the 50S subunit in the 70S ribosome.

In terms of biological role, located at the top of the head of the 30S subunit, it contacts several helices of the 16S rRNA. In the 70S ribosome it contacts the 23S rRNA (bridge B1a) and protein L5 of the 50S subunit (bridge B1b), connecting the 2 subunits; these bridges are implicated in subunit movement. Contacts the tRNAs in the A and P-sites. This Methylobacterium radiotolerans (strain ATCC 27329 / DSM 1819 / JCM 2831 / NBRC 15690 / NCIMB 10815 / 0-1) protein is Small ribosomal subunit protein uS13.